The chain runs to 60 residues: Large ribosomal subunit protein uL30 (60 aa).

The protein belongs to the universal ribosomal protein uL30 family. In terms of assembly, part of the 50S ribosomal subunit.

The sequence is that of Large ribosomal subunit protein uL30 from Leifsonia xyli subsp. xyli (strain CTCB07).